A 525-amino-acid chain; its full sequence is ESX-1 secretion-associated protein EspE (525 aa).

Disordered regions lie at residues 244 to 341 and 375 to 494; these read AVAG…PGAA and ALQA…APVH. Over residues 248–258 the composition is skewed to acidic residues; the sequence is DADDTTADDTA. A compositionally biased stretch (basic and acidic residues) spans 274–286; it reads ETSKEDGQSRHEN. A compositionally biased stretch (gly residues) spans 292–306; that stretch reads SGGGGGATSGGGGGA. Composition is skewed to low complexity over residues 307–319, 332–341, and 375–397; these read PSSASSAGPAGTP, TPTDAQPGAA, and ALQAATQAGAQAAQLAGQAAAAP. The segment covering 411 to 440 has biased composition (basic and acidic residues); sequence DPDAEGDKDSDKRDGEGKEDGTAPRDREST.

The protein resides in the cytoplasm. The polypeptide is ESX-1 secretion-associated protein EspE (Mycolicibacterium smegmatis (strain ATCC 700084 / mc(2)155) (Mycobacterium smegmatis)).